The chain runs to 418 residues: AP-3 complex subunit mu-2 (418 aa).

The 242-residue stretch at 176–417 folds into the MHD domain; that stretch reads NNEAYFDVIE…MTKAGKFQVR (242 aa).

This sequence belongs to the adaptor complexes medium subunit family. As to quaternary structure, AP-3 associates with the BLOC-1 complex. Adaptor protein complex 3 (AP-3) is a heterotetramer composed of two large adaptins (delta-type subunit AP3D1 and beta-type subunit AP3B1 or AP3B2), a medium adaptin (mu-type subunit AP3M1 or AP3M2) and a small adaptin (sigma-type subunit APS1 or AP3S2).

It is found in the golgi apparatus. The protein localises to the cytoplasmic vesicle membrane. In terms of biological role, part of the AP-3 complex, an adaptor-related complex which is not clathrin-associated. The complex is associated with the Golgi region as well as more peripheral structures. It facilitates the budding of vesicles from the Golgi membrane and may be directly involved in trafficking to lysosomes. In concert with the BLOC-1 complex, AP-3 is required to target cargos into vesicles assembled at cell bodies for delivery into neurites and nerve terminals. The polypeptide is AP-3 complex subunit mu-2 (AP3M2) (Homo sapiens (Human)).